Consider the following 107-residue polypeptide: Quaternary ammonium compound-resistance protein QacC (107 aa).

3 consecutive transmembrane segments (helical) span residues 26–46 (FSKF…FYFL), 57–77 (ITYA…SIII), and 84–104 (LITI…NIFG).

This sequence belongs to the drug/metabolite transporter (DMT) superfamily. Small multidrug resistance (SMR) (TC 2.A.7.1) family.

Its subcellular location is the cell membrane. In terms of biological role, multidrug exporter. Is implicated for the resistance to bacteriocidal quaternary ammonium compounds. This is Quaternary ammonium compound-resistance protein QacC from Staphylococcus sp. (strain ST827).